The following is a 101-amino-acid chain: Small ribosomal subunit protein uS14 (101 aa).

Belongs to the universal ribosomal protein uS14 family. Part of the 30S ribosomal subunit. Contacts proteins S3 and S10.

Functionally, binds 16S rRNA, required for the assembly of 30S particles and may also be responsible for determining the conformation of the 16S rRNA at the A site. In Chlamydia pneumoniae (Chlamydophila pneumoniae), this protein is Small ribosomal subunit protein uS14.